A 371-amino-acid polypeptide reads, in one-letter code: Vasopressin V2 receptor (371 aa).

Residues 1–30 (MLMASTTSAVPGHPSLPSLPSNSSQERPLD) are disordered. Topologically, residues 1–38 (MLMASTTSAVPGHPSLPSLPSNSSQERPLDTRDPLLAR) are extracellular. Residues 15–24 (SLPSLPSNSS) are compositionally biased toward low complexity. Asn-22 carries N-linked (GlcNAc...) asparagine glycosylation. A helical membrane pass occupies residues 39-63 (AELALLSIVFVAVALSNGLVLAALA). Topologically, residues 64–77 (RRGRRGHWAPIHVF) are cytoplasmic. The chain crosses the membrane as a helical span at residues 78 to 98 (IGHLCLADLAVALFQVLPQLA). Topologically, residues 99-113 (WKATDRFRGPDALCR) are extracellular. A helical membrane pass occupies residues 114–135 (AVKYLQMVGMYASSYMILAMTL). Residues 136 to 159 (DRHRAICRPMLAYRHGSGAHWNRP) are Cytoplasmic-facing. Residues 160–180 (VLVAWAFSLLLSLPQLFIFAQ) form a helical membrane-spanning segment. Residues 181–200 (RNVEGGSGVTDCWACFAEPW) lie on the Extracellular side of the membrane. A helical membrane pass occupies residues 201-220 (GRRTYVTWIALMVFVAPTLG). Over 221-271 (IAACQVLIFREIHASLVPGPSERPGGRRRGRRTGSPGEGAHVSAAVAKTVR) the chain is Cytoplasmic. Residues 240-259 (PSERPGGRRRGRRTGSPGEG) are disordered. A helical transmembrane segment spans residues 272 to 293 (MTLVIVVVYVLCWAPFFLVQLW). At 294 to 308 (AAWDPEAPLEGAPFV) the chain is on the extracellular side. The helical transmembrane segment at 309–328 (LLMLLASLNSCTNPWIYASF) threads the bilayer. Residues 329-371 (SSSVSSELRSLLCCARGRTPPSLGPQDESCTTASSSLAKDTSS) are Cytoplasmic-facing. S-palmitoyl cysteine attachment occurs at residues Cys-341 and Cys-342. The disordered stretch occupies residues 349-371 (PSLGPQDESCTTASSSLAKDTSS). Over residues 356–371 (ESCTTASSSLAKDTSS) the composition is skewed to polar residues.

This sequence belongs to the G-protein coupled receptor 1 family. Vasopressin/oxytocin receptor subfamily. In terms of assembly, interacts with ARRDC4. Identified in a complex containing at least ARRDC4, V2R and HGS. Interacts with TMEM147. In terms of tissue distribution, kidney.

It localises to the cell membrane. In terms of biological role, receptor for arginine vasopressin. The activity of this receptor is mediated by G proteins which activate adenylate cyclase. Involved in renal water reabsorption. The sequence is that of Vasopressin V2 receptor (AVPR2) from Homo sapiens (Human).